Consider the following 206-residue polypeptide: uncharacterized protein (206 aa).

Residues 128–206 (KRYNVQKPKV…DQSWLDELLR (79 aa)) form a disordered region. Residues 171 to 181 (YISSNHSSMHI) are compositionally biased toward polar residues.

Its subcellular location is the cytoplasm. It is found in the nucleus. This is an uncharacterized protein from Schizosaccharomyces pombe (strain 972 / ATCC 24843) (Fission yeast).